The chain runs to 596 residues: MKKMNLAVCIATLMGTAGLMGTAVAADNLAEFHVQNQECDSCHTPDGELSNDSLTYENTQCVSCHGTLAEVAETTKHEHYNAHASHFPGEVACTSCHSAHEKSMVYCDSCHSFDFNMPYAKKWLRDEPTIAELAKDKSERQAALASAPHDTVDVVVVGSGGAGFSAAISATDSGAKVILIEKEPVIGGNAKLAAGGMNAAWTDQQKAKKITDSPELMFEDTMKGGQNINDPALVKVLSSHSKDSVDWMTAMGADLTDVGMMGGASVNRAHRPTGGAGVGAHVVQVLYDNAVKRNIDLRMNTRGIEVLKDDKGTVKGILVKGMYKGYYWVKADAVILATGGFAKNNERVAKLDPSLKGFISTNQPGAVGDGLDVAENAGGALKDMQYIQAHPTLSVKGGVMVTEAVRGNGAILVNREGKRFVNEITTRDKASAAILAQTGKSAYLIFDDSVRKSLSKIDKYIGLGVAPTADSLVKLGKMEGIDGKALTETVARYNSLVSSGKDTDFERPNLPRALNEGNYYAIEVTPGVHHTMGGVMIDTKAEVMNAKKQVIPGLYGAGEVTGGVHGANRLGGNAISDIITFGRLAGEEAAKYSKKN.

A signal peptide spans 1–25; the sequence is MKKMNLAVCIATLMGTAGLMGTAVA. Residues histidine 33, cysteine 39, cysteine 42, histidine 43, cysteine 61, cysteine 64, histidine 65, histidine 83, histidine 86, cysteine 93, cysteine 96, histidine 97, alanine 99, histidine 100, cysteine 107, cysteine 110, and histidine 111 each coordinate heme c. The interval 143–596 is flavoprotein-like; it reads ALASAPHDTV…EEAAKYSKKN (454 aa). Positions 162, 181, 189, 194, 195, 196, 303, and 369 each coordinate FAD. Glycine 195 is a binding site for fumarate. Residue glycine 195 coordinates succinate. Tyrosine 386 provides a ligand contact to heme c. Residues histidine 390, threonine 402, and glutamate 403 each coordinate succinate. 2 residues coordinate fumarate: threonine 402 and glutamate 403. Arginine 427 serves as the catalytic Proton donor. Histidine 529 is a fumarate binding site. Histidine 529 serves as a coordination point for succinate. Residues histidine 530 and glutamate 559 each contribute to the FAD site. Positions 569 and 572 each coordinate fumarate. 2 residues coordinate succinate: arginine 569 and glycine 572. FAD is bound by residues alanine 574 and isoleucine 575.

In the C-terminal section; belongs to the FAD-dependent oxidoreductase 2 family. FRD/SDH subfamily. As to quaternary structure, monomer. FAD serves as cofactor. Heme c is required as a cofactor.

The protein resides in the periplasm. The catalysed reaction is 2 Fe(III)-[cytochrome c] + succinate = fumarate + 2 Fe(II)-[cytochrome c] + 2 H(+). With respect to regulation, mesaconic acid is a competitive inhibitor of fumarate reduction. Flavocytochrome that catalyzes the reduction of fumarate to succinate. Is essential for fumarate respiration during anaerobic growth, acting as the terminal reductase. Receives electrons from the membrane-bound tetraheme c-type cytochrome CymA. Is essentially unidirectional, catalyzing only fumarate reduction. Cannot reduce nitrite, dimethylsulphoxide, trimethylamine-N-oxide (TMAO) or sulfite. In vitro, can use the artificial electron donor methyl viologen. This Shewanella frigidimarina (strain NCIMB 400) protein is Fumarate reductase (cytochrome).